The primary structure comprises 220 residues: MKPDIKICGLKTPETLERVVRRGASHVGFIFFEKSPRYIEPDLAGRLAEAARGAAKVVAVTVDADNDYLDEIVDLVRPDILQLHGSESPERLLHIKALYGLPVMKAISIRDAADLAKIEPYIGIADRFLLDAKAPAGSDLPGGNGVSFDWTILRSLDESVDYMLSGGLNKDNVAEALAETRASGLDLSSGVESAPGVKDLSKIDAFFDVVNDWSKGPKGA.

It belongs to the TrpF family.

The catalysed reaction is N-(5-phospho-beta-D-ribosyl)anthranilate = 1-(2-carboxyphenylamino)-1-deoxy-D-ribulose 5-phosphate. Its pathway is amino-acid biosynthesis; L-tryptophan biosynthesis; L-tryptophan from chorismate: step 3/5. This chain is N-(5'-phosphoribosyl)anthranilate isomerase, found in Agrobacterium fabrum (strain C58 / ATCC 33970) (Agrobacterium tumefaciens (strain C58)).